A 705-amino-acid polypeptide reads, in one-letter code: Calpastatin (705 aa).

Disordered stretches follow at residues 1–211 (MNPT…PNDA) and 226–493 (LTTC…PLPP). 2 stretches are compositionally biased toward basic and acidic residues: residues 7 to 17 (KAVKTEPEKKP) and 24 to 62 (VVHE…EKAV). Residue K10 forms a Glycyl lysine isopeptide (Lys-Gly) (interchain with G-Cter in SUMO2) linkage. Position 28 is an N6-acetyllysine (K28). 2 stretches are compositionally biased toward low complexity: residues 63–72 (SKSSEQPPSE) and 94–103 (PAAAAAASAE). Residue S65 is modified to Phosphoserine. T115 is subject to Phosphothreonine. Over residues 135-151 (TALDDLIDTLGEPEEMK) the composition is skewed to acidic residues. Residues 149 to 202 (EMKEDNTTYTGPEVSDPMSSTYIEELGKRESTPPPKYKELLNKEEGIAGPPPDS) form an Inhibitory domain 1 repeat. Residues 173 to 194 (ELGKRESTPPPKYKELLNKEEG) show a composition bias toward basic and acidic residues. Residues S202 and S230 each carry the phosphoserine modification. The span at 234-248 (DGKETEKEKSTEEAL) shows a compositional bias: basic and acidic residues. The segment covering 275-286 (TEQALQALSASL) has biased composition (polar residues). Composition is skewed to basic and acidic residues over residues 289-317 (RKPE…KKCG) and 327-352 (YRLK…KPLS). Residues 292–344 (EPELDPSSIREVDEAKAKEEKVKKCGEDEETVPSEYRLKPATDKDGKPLLPEA) form an Inhibitory domain 2 repeat. Phosphoserine is present on residues S352, S354, and S361. Acidic residues predominate over residues 355–364 (ELIDELSEDF). Over residues 365 to 381 (DQSKPTEKQSKPTEKTE) the composition is skewed to basic and acidic residues. Phosphoserine is present on S428. Residues 430-489 (PKKEADPEDGKPVEDKVKEKAKEEDRENFGEKEETIPPDYRLEEAKDKDGKPLLPKEVKE) show a composition bias toward basic and acidic residues. The Inhibitory domain 3 repeat unit spans residues 434 to 487 (ADPEDGKPVEDKVKEKAKEEDRENFGEKEETIPPDYRLEEAKDKDGKPLLPKEV). A phosphoserine mark is found at S504 and S515. The disordered stretch occupies residues 527-705 (VSEVVSQTPA…KPKADGKSTS (179 aa)). Positions 533 to 542 (QTPAPTTQAA) are enriched in low complexity. Phosphoserine is present on S563. The stretch at 571-624 (PDPDENKPVEDKVKEKAKAEHRDKLGERDDTIPPKYQHLLDDNKEGTPGKPKDQ) is one Inhibitory domain 4 repeat. A compositionally biased stretch (basic and acidic residues) spans 571–625 (PDPDENKPVEDKVKEKAKAEHRDKLGERDDTIPPKYQHLLDDNKEGTPGKPKDQR). Over residues 651–662 (DSCPSTTETSTD) the composition is skewed to low complexity. Positions 683–705 (KAKDSTKAKEETSKPKADGKSTS) are enriched in basic and acidic residues.

This sequence belongs to the protease inhibitor I27 (calpastatin) family.

Specific inhibition of calpain (calcium-dependent cysteine protease). Plays a key role in postmortem tenderization of meat and have been proposed to be involved in muscle protein degradation in living tissue. The chain is Calpastatin (CAST) from Bos taurus (Bovine).